A 536-amino-acid polypeptide reads, in one-letter code: Glycine--tRNA ligase (536 aa).

The segment at leucine 56–glutamate 67 is insert. Residues arginine 106 and glutamate 213 each contribute to the substrate site. ATP-binding positions include arginine 245 to glutamate 247, phenylalanine 255 to phenylalanine 260, and glutamate 333 to leucine 334. Phenylalanine 260 to glutamate 264 provides a ligand contact to substrate. The tract at residues glutamate 350 to histidine 372 is insert. Glutamate 396–glycine 400 is a binding site for substrate. Glycine 400 to arginine 403 serves as a coordination point for ATP.

Belongs to the class-II aminoacyl-tRNA synthetase family. As to quaternary structure, homodimer.

The protein localises to the cytoplasm. It carries out the reaction tRNA(Gly) + glycine + ATP = glycyl-tRNA(Gly) + AMP + diphosphate. Its function is as follows. Catalyzes the attachment of glycine to tRNA(Gly). The polypeptide is Glycine--tRNA ligase (Rhodopirellula baltica (strain DSM 10527 / NCIMB 13988 / SH1)).